Reading from the N-terminus, the 143-residue chain is MGLSPQLAAVLLCLLVCTGNYARRQDREAGLREIIHNLDQVLKKETPCTEMFVPDVLIATKNTTEKGLLCRATRVLRKFYFPREVTPCLKNNSGVLSILRKLCRSISTLHPQESCSVSTPTLTTLNDFLGRLRGIMQMKNWQG.

A signal peptide spans 1-19; that stretch reads MGLSPQLAAVLLCLLVCTG. Disulfide bonds link Cys48–Cys88 and Cys70–Cys115. N-linked (GlcNAc...) asparagine glycosylation is found at Asn62 and Asn91.

The protein belongs to the IL-4/IL-13 family.

Its subcellular location is the secreted. In terms of biological role, participates in at least several B-cell activation processes as well as of other cell types. It is a costimulator of DNA-synthesis. It induces the expression of class II MHC molecules on resting B-cells. It enhances both secretion and cell surface expression of IgE and IgG1. It also regulates the expression of the low affinity Fc receptor for IgE (CD23) on both lymphocytes and monocytes. Positively regulates IL31RA expression in macrophages. Stimulates autophagy in dendritic cells by interfering with mTORC1 signaling and through the induction of RUFY4. The protein is Interleukin-4 (IL4) of Meriones unguiculatus (Mongolian jird).